Reading from the N-terminus, the 76-residue chain is Small proline-rich protein 2F (76 aa).

3 tandem repeats follow at residues 21-29 (PKCPEPCSP), 30-38 (SVCPEPCPP), and 39-47 (PKCPEPCPE). The 3 X 9 AA approximate tandem repeats stretch occupies residues 21–47 (PKCPEPCSPSVCPEPCPPPKCPEPCPE). Residues 53 to 76 (SFQQKCPPVQPPPPCQQKCPPKSK) form a disordered region.

The protein belongs to the cornifin (SPRR) family. In terms of tissue distribution, expressed in uterus.

Its subcellular location is the cytoplasm. Functionally, cross-linked envelope protein of keratinocytes. It is a keratinocyte protein that first appears in the cell cytosol, but ultimately becomes cross-linked to membrane proteins by transglutaminase. All that results in the formation of an insoluble envelope beneath the plasma membrane. This is Small proline-rich protein 2F (Sprr2f) from Mus musculus (Mouse).